A 951-amino-acid chain; its full sequence is Bromodomain-containing protein 8 (951 aa).

Lysine 85 carries the post-translational modification N6-acetyllysine. Residues 97–171 (VRKLTAERVE…ATDAAYQARQ (75 aa)) adopt a coiled-coil conformation. The segment at 161-273 (KATDAAYQAR…TPPPSPLLSE (113 aa)) is disordered. Polar residues predominate over residues 204 to 226 (TPTTMEEATSGVTPGTLPSTPVT). Phosphoserine occurs at positions 456 and 460. Residues 520–547 (EENDDPQSLPGPWEHPIQQERDKPVPLP) are disordered. Lysine 542 is covalently cross-linked (Glycyl lysine isopeptide (Lys-Gly) (interchain with G-Cter in SUMO2)). Lysine 554 carries the post-translational modification N6-acetyllysine; alternate. Lysine 554 is covalently cross-linked (Glycyl lysine isopeptide (Lys-Gly) (interchain with G-Cter in SUMO1); alternate). Residue lysine 554 forms a Glycyl lysine isopeptide (Lys-Gly) (interchain with G-Cter in SUMO2); alternate linkage. Lysine 582 participates in a covalent cross-link: Glycyl lysine isopeptide (Lys-Gly) (interchain with G-Cter in SUMO2). The segment at 584 to 745 (EPTEPEPGMS…PVSESDDGFS (162 aa)) is disordered. The span at 610–622 (PELRSQDSDEEPR) shows a compositional bias: basic and acidic residues. Residue lysine 648 forms a Glycyl lysine isopeptide (Lys-Gly) (interchain with G-Cter in SUMO2) linkage. Serine 652 is modified (phosphoserine). Residues 673-688 (ETQHKFEMSDSLKEES) show a composition bias toward basic and acidic residues. Residue lysine 685 forms a Glycyl lysine isopeptide (Lys-Gly) (interchain with G-Cter in SUMO2) linkage. Phosphoserine occurs at positions 694, 710, and 714. The region spanning 779 to 884 (IQAQKIWKKA…RDVLEQIQQF (106 aa)) is the Bromo domain. Positions 900-922 (AKSLRGRDSTRKQDASEKDSVPM) are disordered. The span at 904 to 919 (RGRDSTRKQDASEKDS) shows a compositional bias: basic and acidic residues.

As to quaternary structure, component of the NuA4 histone acetyltransferase complex which contains the catalytic subunit KAT5/TIP60 and the subunits EP400, TRRAP/PAF400, BRD8/SMAP, EPC1, DMAP1/DNMAP1, RUVBL1/TIP49, RUVBL2, ING3, actin, ACTL6A/BAF53A, MORF4L1/MRG15, MORF4L2/MRGX, MRGBP, YEATS4/GAS41, VPS72/YL1 and MEAF6. Component of a NuA4-related complex which contains EP400, TRRAP/PAF400, SRCAP, BRD8/SMAP, EPC1, DMAP1/DNMAP1, RUVBL1/TIP49, RUVBL2, actin, ACTL6A/BAF53A, VPS72 and YEATS4/GAS41. BRD8 isoform 2 interacts with RXRA/NR2B1 and THRB/ERBA2. Component of a SWR1-like complex.

It localises to the nucleus. In terms of biological role, may act as a coactivator during transcriptional activation by hormone-activated nuclear receptors (NR). Stimulates transcriptional activation by AR/DHTR, ESR1/NR3A1, RXRA/NR2B1 and THRB/ERBA2. Component of the NuA4 histone acetyltransferase (HAT) complex which is involved in transcriptional activation of select genes principally by acetylation of nucleosomal histones H4 and H2A. This modification may both alter nucleosome - DNA interactions and promote interaction of the modified histones with other proteins which positively regulate transcription. This complex may be required for the activation of transcriptional programs associated with oncogene and proto-oncogene mediated growth induction, tumor suppressor mediated growth arrest and replicative senescence, apoptosis, and DNA repair. NuA4 may also play a direct role in DNA repair when recruited to sites of DNA damage. Component of a SWR1-like complex that specifically mediates the removal of histone H2A.Z/H2AZ1 from the nucleosome. This Mus musculus (Mouse) protein is Bromodomain-containing protein 8 (Brd8).